A 173-amino-acid chain; its full sequence is MTNLILIFAAQILLFYAVASVGDELGRTMNGKHLGPYKKEKLTHLRVYWHNSVNGRNPSSVMIQQPVLNSSLSGSITMMDDPLTFDVPRNATVVGQAQGMYVAAAQGEIGFLMVMNFAFTTGKYNGSTITILGRNVVMSKVREMPVVGGSGIFRFARGYVEARTKSFDLKAGC.

The N-terminal stretch at 1-22 is a signal peptide; that stretch reads MTNLILIFAAQILLFYAVASVG. 3 N-linked (GlcNAc...) asparagine glycosylation sites follow: Asn69, Asn90, and Asn125.

The protein belongs to the plant dirigent protein family. As to quaternary structure, homodimer.

Its subcellular location is the secreted. It is found in the extracellular space. The protein localises to the apoplast. In terms of biological role, dirigent proteins impart stereoselectivity on the phenoxy radical-coupling reaction, yielding optically active lignans from two molecules of coniferyl alcohol in the biosynthesis of lignans, flavonolignans, and alkaloids and thus plays a central role in plant secondary metabolism. This Arabidopsis thaliana (Mouse-ear cress) protein is Dirigent protein 8 (DIR8).